We begin with the raw amino-acid sequence, 165 residues long: UI (165 aa).

Residues 1 to 18 (MKPVPLILLLATVLLSSH) form the signal peptide. Position 163 is a valine amide (Val163).

The protein belongs to the sauvagine/corticotropin-releasing factor/urotensin I family.

It localises to the secreted. Urotensin is found in the teleost caudal neurosecretory system. It has a suggested role in osmoregulation and as a corticotropin-releasing factor. The non-hormonal portion of this precursor may be a urotensin binding protein, urophysin. This is UI from Oncorhynchus mykiss (Rainbow trout).